Consider the following 233-residue polypeptide: Putative 26S proteasome non-ATPase regulatory subunit 8 homolog B (233 aa).

M1 is subject to N-acetylmethionine. One can recognise a PCI domain in the interval D38–Q217.

It belongs to the proteasome subunit S14 family. As to quaternary structure, component of the 19S regulatory particle (RP/PA700) lid subcomplex of the 26S proteasome. The 26S proteasome is composed of a core protease (CP), known as the 20S proteasome, capped at one or both ends by the 19S regulatory particle (RP/PA700). The RP/PA700 complex is composed of at least 17 different subunits in two subcomplexes, the base and the lid, which form the portions proximal and distal to the 20S proteolytic core, respectively. Interacts with UCH1 and UCH2.

Its function is as follows. Acts as a regulatory subunit of the 26S proteasome which is involved in the ATP-dependent degradation of ubiquitinated proteins. This is Putative 26S proteasome non-ATPase regulatory subunit 8 homolog B from Arabidopsis thaliana (Mouse-ear cress).